Reading from the N-terminus, the 260-residue chain is MAHAWGYGPADGPESWAESFPIANGPRQSPIDIVPTQAQHDPSLKHLKLKYDPATTKSILNNGHSFQVDFVDDDNSSTLAGGPITGIYRLRQFHFHWGSSDDKGSEHTIAGTKFPCELHLVHWNTKYPNFGEAASKPDGLAVVGVFLKIGAANPRLQKVLDALDDIKSKGRQTTFANFDPKTLLPASLDYWTYEGSLTTPPLLESVTWIVLKEPISVSPAQMAKFRSLLFSSEGETPCCMVDNYRPPQPLKGRKVRASFK.

The segment at 1–31 is disordered; that stretch reads MAHAWGYGPADGPESWAESFPIANGPRQSPI. The Alpha-carbonic anhydrase domain occupies 3 to 259; that stretch reads HAWGYGPADG…LKGRKVRASF (257 aa). The active-site Proton acceptor is the His-64. His-94, His-96, and His-119 together coordinate Zn(2+). The active site involves Tyr-127. 198–199 serves as a coordination point for substrate; that stretch reads TT.

The protein belongs to the alpha-carbonic anhydrase family. It depends on Zn(2+) as a cofactor.

It carries out the reaction hydrogencarbonate + H(+) = CO2 + H2O. Its function is as follows. Reversible hydration of carbon dioxide. The chain is Carbonic anhydrase (cahz) from Danio rerio (Zebrafish).